Reading from the N-terminus, the 317-residue chain is MVRSGKGIQNKNATEVTEFILLGLSDNPDLQGVLFALFLIIYTMTLVGNLGMMALIKIDRSLHTPMYFFLSSLSFVDASYSSSVTPKMLVNLMAEDKSISFNGCATQFFFFGSFLGTECFLLAMMAYDRYAAIWNPLLYPVLMSGRICFMLVSTSFLAGFGNAAIHTGMTFRLSFCGSNKINHFYCDTPPLLKLSCSDTHINGIVIMAFSSFNVISCVLIVLISYLCILIAILKMPSAEGRHKAFSTCASHLMAVTIFFGTILFMYLRPTSSYSMEQDKVVSVFYTVVIPMLNPLIYSLKNKDVKKAVKKILHNYVV.

Residues methionine 1–glycine 32 lie on the Extracellular side of the membrane. N-linked (GlcNAc...) asparagine glycosylation occurs at asparagine 12. Residues valine 33–methionine 53 traverse the membrane as a helical segment. The Cytoplasmic segment spans residues alanine 54–serine 61. The chain crosses the membrane as a helical span at residues leucine 62–serine 82. Residues serine 83 to threonine 106 are Extracellular-facing. Cysteine 104 and cysteine 196 are joined by a disulfide. Residues glutamine 107–tyrosine 127 traverse the membrane as a helical segment. Residues aspartate 128–proline 140 are Cytoplasmic-facing. The helical transmembrane segment at valine 141–glycine 161 threads the bilayer. The Extracellular segment spans residues asparagine 162 to glycine 203. Residues isoleucine 204 to serine 224 form a helical membrane-spanning segment. Residues tyrosine 225–alanine 244 are Cytoplasmic-facing. A helical transmembrane segment spans residues phenylalanine 245–methionine 265. Residues tyrosine 266–aspartate 278 lie on the Extracellular side of the membrane. A helical membrane pass occupies residues lysine 279–leucine 299. The Cytoplasmic portion of the chain corresponds to lysine 300–valine 317.

This sequence belongs to the G-protein coupled receptor 1 family.

Its subcellular location is the cell membrane. Functionally, odorant receptor. The chain is Olfactory receptor 5AP2 from Mus musculus (Mouse).